Reading from the N-terminus, the 237-residue chain is RING-H2 finger protein ATL57 (237 aa).

Residues 51–71 traverse the membrane as a helical segment; the sequence is ALTIFILLVALFFMGFFSVYF. The RING-type; atypical zinc-finger motif lies at 140–182; it reads CVICLSDFEEGETVKVIPHCGHVFHVDCVDTWLSSYVTCPLCR.

Belongs to the RING-type zinc finger family. ATL subfamily.

The protein resides in the membrane. It carries out the reaction S-ubiquitinyl-[E2 ubiquitin-conjugating enzyme]-L-cysteine + [acceptor protein]-L-lysine = [E2 ubiquitin-conjugating enzyme]-L-cysteine + N(6)-ubiquitinyl-[acceptor protein]-L-lysine.. The protein operates within protein modification; protein ubiquitination. This Arabidopsis thaliana (Mouse-ear cress) protein is RING-H2 finger protein ATL57 (ATL57).